The following is a 266-amino-acid chain: tRNA dimethylallyltransferase (266 aa).

This sequence belongs to the IPP transferase family. In terms of assembly, monomer. It depends on Mg(2+) as a cofactor.

The enzyme catalyses adenosine(37) in tRNA + dimethylallyl diphosphate = N(6)-dimethylallyladenosine(37) in tRNA + diphosphate. Catalyzes the transfer of a dimethylallyl group onto the adenine at position 37 in tRNAs that read codons beginning with uridine, leading to the formation of N6-(dimethylallyl)adenosine (i(6)A). This chain is tRNA dimethylallyltransferase (miaA), found in Helicobacter acinonychis (strain Sheeba).